The primary structure comprises 348 residues: Holliday junction branch migration complex subunit RuvB (348 aa).

The interval 4-184 (ADRLIAASGR…FGIVQRLEFY (181 aa)) is large ATPase domain (RuvB-L). ATP-binding positions include isoleucine 23, arginine 24, glycine 65, lysine 68, threonine 69, threonine 70, 131–133 (EDF), arginine 174, tyrosine 184, and arginine 221. Position 69 (threonine 69) interacts with Mg(2+). The segment at 185 to 255 (NDKDLSTIVS…VADMALNLLD (71 aa)) is small ATPAse domain (RuvB-S). The tract at residues 258-348 (ERGFDHSDRR…GGDFSGPGDE (91 aa)) is head domain (RuvB-H). DNA is bound by residues arginine 294, arginine 313, and arginine 318.

This sequence belongs to the RuvB family. Homohexamer. Forms an RuvA(8)-RuvB(12)-Holliday junction (HJ) complex. HJ DNA is sandwiched between 2 RuvA tetramers; dsDNA enters through RuvA and exits via RuvB. An RuvB hexamer assembles on each DNA strand where it exits the tetramer. Each RuvB hexamer is contacted by two RuvA subunits (via domain III) on 2 adjacent RuvB subunits; this complex drives branch migration. In the full resolvosome a probable DNA-RuvA(4)-RuvB(12)-RuvC(2) complex forms which resolves the HJ.

It localises to the cytoplasm. The catalysed reaction is ATP + H2O = ADP + phosphate + H(+). Functionally, the RuvA-RuvB-RuvC complex processes Holliday junction (HJ) DNA during genetic recombination and DNA repair, while the RuvA-RuvB complex plays an important role in the rescue of blocked DNA replication forks via replication fork reversal (RFR). RuvA specifically binds to HJ cruciform DNA, conferring on it an open structure. The RuvB hexamer acts as an ATP-dependent pump, pulling dsDNA into and through the RuvAB complex. RuvB forms 2 homohexamers on either side of HJ DNA bound by 1 or 2 RuvA tetramers; 4 subunits per hexamer contact DNA at a time. Coordinated motions by a converter formed by DNA-disengaged RuvB subunits stimulates ATP hydrolysis and nucleotide exchange. Immobilization of the converter enables RuvB to convert the ATP-contained energy into a lever motion, pulling 2 nucleotides of DNA out of the RuvA tetramer per ATP hydrolyzed, thus driving DNA branch migration. The RuvB motors rotate together with the DNA substrate, which together with the progressing nucleotide cycle form the mechanistic basis for DNA recombination by continuous HJ branch migration. Branch migration allows RuvC to scan DNA until it finds its consensus sequence, where it cleaves and resolves cruciform DNA. The sequence is that of Holliday junction branch migration complex subunit RuvB from Pseudomonas putida (strain ATCC 700007 / DSM 6899 / JCM 31910 / BCRC 17059 / LMG 24140 / F1).